We begin with the raw amino-acid sequence, 418 residues long: UDP-N-acetylglucosamine 1-carboxyvinyltransferase (418 aa).

22–23 (KN) serves as a coordination point for phosphoenolpyruvate. UDP-N-acetyl-alpha-D-glucosamine is bound at residue Arg-91. Catalysis depends on Cys-115, which acts as the Proton donor. Cys-115 carries the post-translational modification 2-(S-cysteinyl)pyruvic acid O-phosphothioketal. UDP-N-acetyl-alpha-D-glucosamine-binding residues include Asp-303 and Ile-325.

Belongs to the EPSP synthase family. MurA subfamily.

The protein localises to the cytoplasm. The enzyme catalyses phosphoenolpyruvate + UDP-N-acetyl-alpha-D-glucosamine = UDP-N-acetyl-3-O-(1-carboxyvinyl)-alpha-D-glucosamine + phosphate. It participates in cell wall biogenesis; peptidoglycan biosynthesis. Functionally, cell wall formation. Adds enolpyruvyl to UDP-N-acetylglucosamine. The sequence is that of UDP-N-acetylglucosamine 1-carboxyvinyltransferase from Syntrophobacter fumaroxidans (strain DSM 10017 / MPOB).